A 152-amino-acid polypeptide reads, in one-letter code: Ubiquitin-conjugating enzyme E2 2 (152 aa).

One can recognise a UBC core domain in the interval 4–150 (PARKRLMRDF…VREVVEQSWT (147 aa)). C88 (glycyl thioester intermediate) is an active-site residue.

This sequence belongs to the ubiquitin-conjugating enzyme family.

It catalyses the reaction S-ubiquitinyl-[E1 ubiquitin-activating enzyme]-L-cysteine + [E2 ubiquitin-conjugating enzyme]-L-cysteine = [E1 ubiquitin-activating enzyme]-L-cysteine + S-ubiquitinyl-[E2 ubiquitin-conjugating enzyme]-L-cysteine.. The protein operates within protein modification; protein ubiquitination. Catalyzes the covalent attachment of ubiquitin to other proteins. The sequence is that of Ubiquitin-conjugating enzyme E2 2 (UBC2) from Triticum aestivum (Wheat).